Here is a 173-residue protein sequence, read N- to C-terminus: Photosystem I assembly protein Ycf3 (173 aa).

3 TPR repeats span residues 35–68 (AFAY…EEDP), 72–105 (AFIL…NAKM), and 120–153 (GSIA…APNN).

It belongs to the Ycf3 family.

The protein localises to the cellular thylakoid membrane. Essential for the assembly of the photosystem I (PSI) complex. May act as a chaperone-like factor to guide the assembly of the PSI subunits. The protein is Photosystem I assembly protein Ycf3 of Synechococcus sp. (strain RCC307).